A 200-amino-acid polypeptide reads, in one-letter code: Probable molybdenum cofactor guanylyltransferase (200 aa).

GTP-binding positions include Leu9 to Gly11, Lys21, Asp69, and Asp100. A Mg(2+)-binding site is contributed by Asp100.

It belongs to the MobA family. The cofactor is Mg(2+).

It is found in the cytoplasm. It carries out the reaction Mo-molybdopterin + GTP + H(+) = Mo-molybdopterin guanine dinucleotide + diphosphate. Transfers a GMP moiety from GTP to Mo-molybdopterin (Mo-MPT) cofactor (Moco or molybdenum cofactor) to form Mo-molybdopterin guanine dinucleotide (Mo-MGD) cofactor. In Bacillus thuringiensis (strain Al Hakam), this protein is Probable molybdenum cofactor guanylyltransferase.